A 156-amino-acid polypeptide reads, in one-letter code: Cellulose synthase operon protein D (156 aa).

Its pathway is glycan metabolism; bacterial cellulose biosynthesis. Its function is as follows. May have a major role in the perfection of crystallization, involved either in the pore structure itself or in the organization of the pores within the linear array of terminal synthesizing complexes (TCs). This chain is Cellulose synthase operon protein D (acsD), found in Komagataeibacter xylinus (Gluconacetobacter xylinus).